The chain runs to 339 residues: MVREEVAGSTQTLQWKCVESRVDSKRLYYGRFILSPLRKGQADTVGIALRRALLGEIEGTCITRAKFGXVPHEYSTIAGIEESVQEILLNLKEIVLRSNLYGVRDASICVKGPRYITAQDIILPPSVEIVDTXQPIANLTEPIDFCIDLQIKRDRGYQTELRKNYQDGSYPIDAVSMPVRNVNYSIFSCGNGNEKHEILFLEIWTNGSLTPKEALYEASRNLIDLFLPFLHAEEEGTSFEENKNRFTPPLFTFQKRLTNLKKNKKGIPLNYIFIDQLELTSRTYNCLKRANIHTLLDLLSKTEEDLMRIDSFRMEDRKHIWDTLEKHLPIDLLKNKLSF.

The interval 1 to 233 (MVREEVAGST…DLFLPFLHAE (233 aa)) is alpha N-terminal domain (alpha-NTD). The segment at 264 to 339 (KKGIPLNYIF…IDLLKNKLSF (76 aa)) is alpha C-terminal domain (alpha-CTD).

This sequence belongs to the RNA polymerase alpha chain family. In terms of assembly, in plastids the minimal PEP RNA polymerase catalytic core is composed of four subunits: alpha, beta, beta', and beta''. When a (nuclear-encoded) sigma factor is associated with the core the holoenzyme is formed, which can initiate transcription.

Its subcellular location is the plastid. The protein resides in the chloroplast. It catalyses the reaction RNA(n) + a ribonucleoside 5'-triphosphate = RNA(n+1) + diphosphate. In terms of biological role, DNA-dependent RNA polymerase catalyzes the transcription of DNA into RNA using the four ribonucleoside triphosphates as substrates. The polypeptide is DNA-directed RNA polymerase subunit alpha (Psathyrostachys rupestris (Hordeum rupestre)).